We begin with the raw amino-acid sequence, 565 residues long: NAD-dependent malic enzyme (565 aa).

Tyrosine 104 acts as the Proton donor in catalysis. NAD(+) is bound at residue arginine 157. The Proton acceptor role is filled by lysine 175. Positions 246, 247, and 270 each coordinate a divalent metal cation. Residues aspartate 270 and asparagine 418 each contribute to the NAD(+) site.

The protein belongs to the malic enzymes family. Homotetramer. Requires Mg(2+) as cofactor. The cofactor is Mn(2+).

The enzyme catalyses (S)-malate + NAD(+) = pyruvate + CO2 + NADH. It carries out the reaction oxaloacetate + H(+) = pyruvate + CO2. The protein is NAD-dependent malic enzyme of Salmonella choleraesuis (strain SC-B67).